A 706-amino-acid chain; its full sequence is MSFLPLRSRSRSGAPHWVYIILYHIFTIPKIYSLPLLSGSHVLNSRDVADSGHSVGDEASVTTYYIISIILVLLGGVFAGLTLGLMGQDEVYLKVISTSGSNSEKKLAKRVLDLISRGKHWVLVTLLLSNVITNETLPIVLDRCLGGGWQAVVSSTILIVIFGEIIPQSVCVKYGLQVGAFFCPFVLVLMYLMYPVAYPIATLLDYMLGEDHGTMYKKSGLKTLVTLHRTMGVERLTKDEVTIISAVLDLKAKRVEEIMTPIENVFTMSADTILDDKTVEKIFNSGFSRIPIFLPNEPNNFIGMLLVRVLISYDPDDCLPISHFPLATLPETSPNTSCLNILNYFQEGKAHMCVVSKEPGSSHGAIGVLTLEDVIEELIGEEIVDESDVFVDMHQHIMRQQPGPLSKRHITSYLHHLYTSSHKEHKAADQADESSPLLSPSNSNHPSEHPQQDLNNKSWKQKSNDGYDRSNAVLSPTPQVTEHGTIIPSNLASNPLNVNKSFVTIKKPANVPKIITTHTPHSSKEPSPAPHSNDKSLSAEEQQLLSDHAELSRQAVLHTQRSGQPTQVTTSTKTTRNSPDSISIPNSGANHGNENQNVTISTSYQNTKNGIVESVITVKGVPKTIIGPAKDWDESKSEYGNENINQENSNRSDDRESSSSNASLFSSIKNKFKNENANNNDRSNFTDSLSRTSNYDANGSSSTIKR.

Topologically, residues 1 to 16 (MSFLPLRSRSRSGAPH) are vacuolar. A helical membrane pass occupies residues 17–37 (WVYIILYHIFTIPKIYSLPLL). Residues 38–65 (SGSHVLNSRDVADSGHSVGDEASVTTYY) lie on the Cytoplasmic side of the membrane. The CNNM transmembrane domain maps to 57-240 (DEASVTTYYI…MGVERLTKDE (184 aa)). A helical transmembrane segment spans residues 66 to 86 (IISIILVLLGGVFAGLTLGLM). The Vacuolar segment spans residues 87-120 (GQDEVYLKVISTSGSNSEKKLAKRVLDLISRGKH). A helical membrane pass occupies residues 121-141 (WVLVTLLLSNVITNETLPIVL). Residues 142–145 (DRCL) are Cytoplasmic-facing. A helical transmembrane segment spans residues 146-166 (GGGWQAVVSSTILIVIFGEII). Over 167–177 (PQSVCVKYGLQ) the chain is Vacuolar. A helical membrane pass occupies residues 178–198 (VGAFFCPFVLVLMYLMYPVAY). At 199–706 (PIATLLDYML…ANGSSSTIKR (508 aa)) the chain is on the cytoplasmic side. CBS domains follow at residues 259–320 (MTPI…DCLP) and 321–386 (ISHF…IVDE). 3 disordered regions span residues 421–495 (SHKE…ASNP), 515–540 (ITTHTPHSSKEPSPAPHSNDKSLSAE), and 557–597 (LHTQ…ENQN). Residues 433-445 (ESSPLLSPSNSNH) show a composition bias toward low complexity. Phosphoserine is present on residues serine 439 and serine 447. A compositionally biased stretch (polar residues) spans 472–495 (AVLSPTPQVTEHGTIIPSNLASNP). Serine 527 carries the post-translational modification Phosphoserine. Residues 566–575 (TQVTTSTKTT) show a composition bias toward low complexity. Over residues 576-597 (RNSPDSISIPNSGANHGNENQN) the composition is skewed to polar residues. A Phosphoserine modification is found at serine 603. Phosphotyrosine is present on tyrosine 604. Residue threonine 607 is modified to Phosphothreonine. Residue serine 614 is modified to Phosphoserine. A disordered region spans residues 626 to 706 (IGPAKDWDES…ANGSSSTIKR (81 aa)). The segment covering 630–639 (KDWDESKSEY) has biased composition (basic and acidic residues). Over residues 658 to 680 (SSSNASLFSSIKNKFKNENANNN) the composition is skewed to low complexity. Polar residues predominate over residues 681 to 706 (DRSNFTDSLSRTSNYDANGSSSTIKR).

The protein belongs to the ACDP family.

It localises to the vacuole membrane. Its function is as follows. Involved in metal homeostasis and more specially in manganese sensitivity. The polypeptide is Protein MAM3 (MAM3) (Saccharomyces cerevisiae (strain ATCC 204508 / S288c) (Baker's yeast)).